We begin with the raw amino-acid sequence, 357 residues long: Glutamyl endopeptidase (357 aa).

An N-terminal signal peptide occupies residues 1 to 29; it reads MKGKFLKVSSLFVATLTTATLVSSPAANA. Positions 30-68 are excised as a propeptide; that stretch reads LSSKAMDNHPQQTQTDKQQTPKIQKGGNLKPLEQRERAN. The interval 33–58 is disordered; sequence KAMDNHPQQTQTDKQQTPKIQKGGNL. Low complexity predominate over residues 40–54; the sequence is QQTQTDKQQTPKIQK. Active-site charge relay system residues include His-119, Asp-161, and Ser-237. A disordered region spans residues 282–357; the sequence is NFANDDHPNN…NNNSDNPDAA (76 aa). Repeat copies occupy residues 289-291, 292-294, 295-297, 298-300, 301-303, 304-306, 307-309, 310-312, 313-315, 316-318, 319-321, 322-324, 325-327, 328-330, 331-333, 337-339, 340-342, and 343-345. Residues 289–345 are 18 X 3 AA repeats of P-[DN]-N; that stretch reads PNNPDNPDNPNNPDNPNNPDNPNNPDNPDNPNNPDNPNNPDNPNNPDQPNNPNNPDN. The segment covering 291-357 has biased composition (low complexity); that stretch reads NPDNPDNPNN…NNNSDNPDAA (67 aa).

Belongs to the peptidase S1B family. Proteolytically cleaved by aureolysin (aur). This cleavage leads to the activation of SspA.

It is found in the secreted. It catalyses the reaction Preferential cleavage: Glu-|-Xaa, Asp-|-Xaa.. Its function is as follows. Preferentially cleaves peptide bonds on the carboxyl-terminal side of aspartate and glutamate. Along with other extracellular proteases it is involved in colonization and infection of human tissues. Required for proteolytic maturation of thiol protease SspB and inactivation of SspC, an inhibitor of SspB. It is the most important protease for degradation of fibronectin-binding protein (FnBP) and surface protein A, which are involved in adherence to host cells. May also protect bacteria against host defense mechanism by cleaving the immunoglobulin classes IgG, IgA and IgM. May be involved in the stability of secreted lipases. The protein is Glutamyl endopeptidase (sspA) of Staphylococcus aureus (strain MRSA252).